Reading from the N-terminus, the 463-residue chain is UDP-N-acetylmuramoylalanine--D-glutamate ligase (463 aa).

Glycine 109–threonine 115 contacts ATP.

The protein belongs to the MurCDEF family.

Its subcellular location is the cytoplasm. The catalysed reaction is UDP-N-acetyl-alpha-D-muramoyl-L-alanine + D-glutamate + ATP = UDP-N-acetyl-alpha-D-muramoyl-L-alanyl-D-glutamate + ADP + phosphate + H(+). Its pathway is cell wall biogenesis; peptidoglycan biosynthesis. In terms of biological role, cell wall formation. Catalyzes the addition of glutamate to the nucleotide precursor UDP-N-acetylmuramoyl-L-alanine (UMA). The protein is UDP-N-acetylmuramoylalanine--D-glutamate ligase of Leptospira interrogans serogroup Icterohaemorrhagiae serovar copenhageni (strain Fiocruz L1-130).